We begin with the raw amino-acid sequence, 294 residues long: Cytidine deaminase (294 aa).

CMP/dCMP-type deaminase domains are found at residues 48–168 (DEDA…FGPK) and 186–294 (LTGN…VLLG). 89–91 (NME) serves as a coordination point for substrate. His-102 lines the Zn(2+) pocket. The active-site Proton donor is the Glu-104. Positions 129 and 132 each coordinate Zn(2+).

The protein belongs to the cytidine and deoxycytidylate deaminase family. In terms of assembly, homodimer. Zn(2+) serves as cofactor.

The enzyme catalyses cytidine + H2O + H(+) = uridine + NH4(+). It carries out the reaction 2'-deoxycytidine + H2O + H(+) = 2'-deoxyuridine + NH4(+). In terms of biological role, this enzyme scavenges exogenous and endogenous cytidine and 2'-deoxycytidine for UMP synthesis. The chain is Cytidine deaminase from Salmonella typhi.